The following is a 512-amino-acid chain: Polyamine oxidase 1 (512 aa).

Positions 38 and 46 each coordinate FAD. Positions 448-470 (DRMAEPLPRGPDAAADERPPSPR) are disordered. Glu-476 is an FAD binding site.

It belongs to the flavin monoamine oxidase family. FAD serves as cofactor.

Its subcellular location is the cytoplasm. The enzyme catalyses spermine + O2 + H2O = 3-aminopropanal + spermidine + H2O2. It catalyses the reaction N(1)-acetylspermine + O2 + H2O = 3-acetamidopropanal + spermidine + H2O2. It carries out the reaction norspermine + O2 + H2O = norspermidine + 3-aminopropanal + H2O2. The catalysed reaction is thermospermine + O2 + H2O = 3-aminopropanal + spermidine + H2O2. The protein operates within amine and polyamine degradation; spermine degradation. In terms of biological role, flavoenzyme involved in polyamine back-conversion. Catalyzes the oxidation of the secondary amino group of polyamines, such as spermine and its acetyl derivatives. Substrate preference is thermospermine &gt; spermine &gt; norspermine &gt; N(1)-acetylspermine. No activity detected when putrescine or spermidine are used as substrates. Plays an important role in the regulation of polyamine intracellular concentration. This Oryza sativa subsp. japonica (Rice) protein is Polyamine oxidase 1.